The chain runs to 261 residues: Putative hydro-lyase Nther_1142 (261 aa).

Belongs to the D-glutamate cyclase family.

The protein is Putative hydro-lyase Nther_1142 of Natranaerobius thermophilus (strain ATCC BAA-1301 / DSM 18059 / JW/NM-WN-LF).